The primary structure comprises 23 residues: Alpha-amanitin proprotein (23 aa).

Ile1 carries the (3R,4R)-4,5-dihydroxyisoleucine; in form alpha-amanitin modification. Ile1 is modified ((3R,4S)-4-hydroxyisoleucine; in form gamma-amanitin). The segment at residues 1–8 is a cross-link (cyclopeptide (Ile-Pro)); sequence IWGIGCNP. Positions 2-6 form a cross-link, 2'-cysteinyl-6'-hydroxytryptophan sulfoxide (Trp-Cys); sequence WGIGC. Pro8 carries the 4-hydroxyproline modification. Residues 9–23 constitute a propeptide that is removed on maturation; it reads CVGDEVTALITRGEA.

This sequence belongs to the MSDIN fungal toxin family. Processed by the macrocyclase-peptidase enzyme POPB to yield a toxic cyclic decapeptide. POPB first removes 10 residues from the N-terminus. Conformational trapping of the remaining peptide forces the enzyme to release this intermediate rather than proceed to macrocyclization. The enzyme rebinds the remaining peptide in a different conformation and catalyzes macrocyclization of the N-terminal 8 residues.

Its function is as follows. Major toxin belonging to the bicyclic octapeptides amatoxins that acts by binding non-competitively to RNA polymerase II and greatly slowing the elongation of transcripts from target promoters. The protein is Alpha-amanitin proprotein of Amanita fuligineoides.